A 170-amino-acid polypeptide reads, in one-letter code: Tubulin polymerization-promoting protein family member 2 (170 aa).

The interval 127–147 is disordered; it reads TGTHKERFDESGKGKGIAGRE. The span at 129–139 shows a compositional bias: basic and acidic residues; sequence THKERFDESGK.

This sequence belongs to the TPPP family.

It localises to the cytoplasm. It is found in the cytosol. The protein localises to the cell projection. Its subcellular location is the cilium. The protein resides in the flagellum. Its function is as follows. Probable regulator of microtubule dynamics required for sperm motility. In contrast to other members of the family, has no microtubule bundling activity. This is Tubulin polymerization-promoting protein family member 2 (TPPP2) from Macaca fascicularis (Crab-eating macaque).